The primary structure comprises 488 residues: Rhamnulokinase (488 aa).

Residue A13 to R17 coordinates ATP. C68 and C222 are disulfide-bonded. Residues G83 and H236–T238 contribute to the substrate site. The active-site Proton acceptor is D237. Residue T259 participates in ATP binding. N296 contributes to the substrate binding site. An ATP-binding site is contributed by Q304. C353 and C370 form a disulfide bridge. G402 contributes to the ATP binding site. C413 and C417 are disulfide-bonded.

Belongs to the rhamnulokinase family. The cofactor is Mg(2+).

The catalysed reaction is L-rhamnulose + ATP = L-rhamnulose 1-phosphate + ADP + H(+). It participates in carbohydrate degradation; L-rhamnose degradation; glycerone phosphate from L-rhamnose: step 2/3. Involved in the catabolism of L-rhamnose (6-deoxy-L-mannose). Catalyzes the transfer of the gamma-phosphate group from ATP to the 1-hydroxyl group of L-rhamnulose to yield L-rhamnulose 1-phosphate. The sequence is that of Rhamnulokinase from Klebsiella pneumoniae subsp. pneumoniae (strain ATCC 700721 / MGH 78578).